The primary structure comprises 397 residues: Riboflavin biosynthesis protein RibBA (397 aa).

Residues 1–199 form a DHBP synthase region; it reads MFHRIEEALE…IEDLIAYRRH (199 aa). Residues 26–27, D31, 138–142, and E162 each bind D-ribulose 5-phosphate; these read RE and RAGHT. Residue E27 participates in Mg(2+) binding. H141 serves as a coordination point for Mg(2+). Residues 200 to 397 form a GTP cyclohydrolase II region; the sequence is HETLVTREVE…ASKLGHLLNL (198 aa). 250-254 serves as a coordination point for GTP; it reads RVHSE. C255, C266, and C268 together coordinate Zn(2+). Residues Q271, 293-295, and T315 contribute to the GTP site; that span reads EGR. Catalysis depends on D327, which acts as the Proton acceptor; for GTP cyclohydrolase activity. Residue R329 is the Nucleophile; for GTP cyclohydrolase activity of the active site. 2 residues coordinate GTP: T350 and K355.

It in the N-terminal section; belongs to the DHBP synthase family. The protein in the C-terminal section; belongs to the GTP cyclohydrolase II family. Mg(2+) serves as cofactor. Mn(2+) is required as a cofactor. It depends on Zn(2+) as a cofactor.

It catalyses the reaction D-ribulose 5-phosphate = (2S)-2-hydroxy-3-oxobutyl phosphate + formate + H(+). The enzyme catalyses GTP + 4 H2O = 2,5-diamino-6-hydroxy-4-(5-phosphoribosylamino)-pyrimidine + formate + 2 phosphate + 3 H(+). Its pathway is cofactor biosynthesis; riboflavin biosynthesis; 2-hydroxy-3-oxobutyl phosphate from D-ribulose 5-phosphate: step 1/1. It participates in cofactor biosynthesis; riboflavin biosynthesis; 5-amino-6-(D-ribitylamino)uracil from GTP: step 1/4. Its function is as follows. Catalyzes the conversion of D-ribulose 5-phosphate to formate and 3,4-dihydroxy-2-butanone 4-phosphate. Functionally, catalyzes the conversion of GTP to 2,5-diamino-6-ribosylamino-4(3H)-pyrimidinone 5'-phosphate (DARP), formate and pyrophosphate. This is Riboflavin biosynthesis protein RibBA from Bacillus mycoides (strain KBAB4) (Bacillus weihenstephanensis).